The primary structure comprises 193 residues: Bcl-2-like protein 2 (193 aa).

At A2 the chain carries N-acetylalanine. A BH4 motif is present at residues D9–C29. The short motif at E85–A104 is the BH1 element. The BH2 motif lies at D136–Y151.

Belongs to the Bcl-2 family. In terms of assembly, interacts with HIF3A isoform 2 (via C-terminus domain). Interacts with BOP. As to expression, expressed in almost all myeloid cell lines and in a wide range of tissues, with highest levels in brain, colon, and salivary gland.

It is found in the mitochondrion membrane. Promotes cell survival. Blocks dexamethasone-induced apoptosis. Mediates survival of postmitotic Sertoli cells by suppressing death-promoting activity of BAX. This is Bcl-2-like protein 2 (Bcl2l2) from Mus musculus (Mouse).